Here is a 108-residue protein sequence, read N- to C-terminus: Large ribosomal subunit protein bL31B (108 aa).

The segment at proline 85–lysine 108 is disordered. Residues lysine 97 to lysine 108 are compositionally biased toward basic residues.

The protein belongs to the bacterial ribosomal protein bL31 family. Type B subfamily. Part of the 50S ribosomal subunit.

This chain is Large ribosomal subunit protein bL31B, found in Chlamydia muridarum (strain MoPn / Nigg).